Here is a 228-residue protein sequence, read N- to C-terminus: Transcription repressor OFP8 (228 aa).

Low complexity-rich tracts occupy residues 1-14 (MSGR…FSLR), 54-79 (ASST…TDSS), and 92-101 (EEPAAAQQEQ). 2 disordered regions span residues 1–21 (MSGR…VVDI) and 36–143 (SSSS…QLQE). Over residues 107-120 (RRRRRQQRRRRRRA) the composition is skewed to basic residues. The 60-residue stretch at 157–216 (VAVESAEPYEDFRESMVQMVVEKEIYAWDDLNDLLHQFLSLNSPRHHPLILHAFADLWTR) folds into the OVATE domain.

Interacts with GSK2. Phosphorylated on serine and threonine residues by GSK2. Dephosphorylated during response to brassinosteroid. In terms of tissue distribution, expressed in roots, stems, stem nodes, young leaves, leaf sheaths, lamina joints, young spikelets, inflorescences, stamens and ovaries, embryos and seeds.

It is found in the nucleus. The protein localises to the cytoplasm. Functionally, probable transcriptional repressor that regulates multiple aspects of plant growth and development, partly through brassinosteroid (BR) signaling pathway. Acts downstream of the kinase GSK2, a negative regulator of BR signaling. This chain is Transcription repressor OFP8, found in Oryza sativa subsp. japonica (Rice).